We begin with the raw amino-acid sequence, 472 residues long: L-aspartate oxidase (472 aa).

FAD contacts are provided by residues 7–10, Ser29, 36–37, 42–43, and Asp191; these read SGIA, ST, and GG. Arg257 serves as the catalytic Proton donor/acceptor. FAD is bound by residues Glu337 and 353–354; that span reads SL.

It belongs to the FAD-dependent oxidoreductase 2 family. NadB subfamily. As to quaternary structure, monomer. The cofactor is FAD.

Its subcellular location is the cytoplasm. It carries out the reaction L-aspartate + O2 = iminosuccinate + H2O2. Its pathway is cofactor biosynthesis; NAD(+) biosynthesis; iminoaspartate from L-aspartate (oxidase route): step 1/1. Catalyzes the oxidation of L-aspartate to iminoaspartate, the first step in the de novo biosynthesis of NAD(+). Can also use L-asparagine, but not L-phenylalanine, L-glutamate, glycine, L-proline, L-alanine and D-aspartate. The chain is L-aspartate oxidase from Sulfurisphaera tokodaii (strain DSM 16993 / JCM 10545 / NBRC 100140 / 7) (Sulfolobus tokodaii).